Here is a 144-residue protein sequence, read N- to C-terminus: Large ribosomal subunit protein uL15 (144 aa).

The disordered stretch occupies residues 1-57 (MRLNTLSPAAGSKHAPKRVGRGIGSGLGKTGGRGHKGQKSRSGGKVRPGFEGGQMPL). Positions 21–31 (RGIGSGLGKTG) are enriched in gly residues. Positions 32 to 44 (GRGHKGQKSRSGG) are enriched in basic residues.

This sequence belongs to the universal ribosomal protein uL15 family. As to quaternary structure, part of the 50S ribosomal subunit.

In terms of biological role, binds to the 23S rRNA. This is Large ribosomal subunit protein uL15 from Vibrio vulnificus (strain CMCP6).